The following is a 122-amino-acid chain: NADPH-dependent 7-cyano-7-deazaguanine reductase (122 aa).

The Thioimide intermediate role is filled by Cys34. The Proton donor role is filled by Asp41. Residues 56–58 (VEL) and 75–76 (HE) each bind substrate.

The protein belongs to the GTP cyclohydrolase I family. QueF type 1 subfamily.

Its subcellular location is the cytoplasm. The enzyme catalyses 7-aminomethyl-7-carbaguanine + 2 NADP(+) = 7-cyano-7-deazaguanine + 2 NADPH + 3 H(+). It participates in tRNA modification; tRNA-queuosine biosynthesis. In terms of biological role, catalyzes the NADPH-dependent reduction of 7-cyano-7-deazaguanine (preQ0) to 7-aminomethyl-7-deazaguanine (preQ1). This is NADPH-dependent 7-cyano-7-deazaguanine reductase from Anaeromyxobacter sp. (strain Fw109-5).